A 157-amino-acid polypeptide reads, in one-letter code: Ribonuclease H (157 aa).

The 142-residue stretch at 1-142 (MKKKIKIFID…CDFLAKISAK (142 aa)) folds into the RNase H type-1 domain. Mg(2+)-binding residues include D10, E48, D70, and D134.

This sequence belongs to the RNase H family. As to quaternary structure, monomer. Requires Mg(2+) as cofactor.

Its subcellular location is the cytoplasm. The enzyme catalyses Endonucleolytic cleavage to 5'-phosphomonoester.. Functionally, endonuclease that specifically degrades the RNA of RNA-DNA hybrids. The polypeptide is Ribonuclease H (Wigglesworthia glossinidia brevipalpis).